Here is a 570-residue protein sequence, read N- to C-terminus: Sulfite reductase [NADPH] hemoprotein beta-component (570 aa).

[4Fe-4S] cluster is bound by residues C434, C440, C479, and C483. C483 serves as a coordination point for siroheme.

The protein belongs to the nitrite and sulfite reductase 4Fe-4S domain family. Alpha(8)-beta(8). The alpha component is a flavoprotein, the beta component is a hemoprotein. The cofactor is siroheme. Requires [4Fe-4S] cluster as cofactor.

It carries out the reaction hydrogen sulfide + 3 NADP(+) + 3 H2O = sulfite + 3 NADPH + 4 H(+). Its pathway is sulfur metabolism; hydrogen sulfide biosynthesis; hydrogen sulfide from sulfite (NADPH route): step 1/1. Component of the sulfite reductase complex that catalyzes the 6-electron reduction of sulfite to sulfide. This is one of several activities required for the biosynthesis of L-cysteine from sulfate. The chain is Sulfite reductase [NADPH] hemoprotein beta-component from Escherichia coli O7:K1 (strain IAI39 / ExPEC).